A 353-amino-acid chain; its full sequence is Photosystem II protein D1 (353 aa).

Position 2 is an N-acetylthreonine (Thr2). The residue at position 2 (Thr2) is a Phosphothreonine. Helical transmembrane passes span Tyr29 to Ser46, His118 to Leu133, and Trp142 to Ala156. Residue His118 coordinates chlorophyll a. Tyr126 lines the pheophytin a pocket. [CaMn4O5] cluster is bound by residues Asp170 and Glu189. Residues Phe197–Leu218 traverse the membrane as a helical segment. Position 198 (His198) interacts with chlorophyll a. A quinone-binding positions include His215 and Ser264–Phe265. His215 is a Fe cation binding site. A Fe cation-binding site is contributed by His272. The chain crosses the membrane as a helical span at residues Phe274 to Leu288. [CaMn4O5] cluster contacts are provided by His332, Glu333, Asp342, and Ala344. A propeptide spanning residues Ala345–Gly353 is cleaved from the precursor.

It belongs to the reaction center PufL/M/PsbA/D family. In terms of assembly, PSII is composed of 1 copy each of membrane proteins PsbA, PsbB, PsbC, PsbD, PsbE, PsbF, PsbH, PsbI, PsbJ, PsbK, PsbL, PsbM, PsbT, PsbX, PsbY, PsbZ, Psb30/Ycf12, at least 3 peripheral proteins of the oxygen-evolving complex and a large number of cofactors. It forms dimeric complexes. The cofactor is The D1/D2 heterodimer binds P680, chlorophylls that are the primary electron donor of PSII, and subsequent electron acceptors. It shares a non-heme iron and each subunit binds pheophytin, quinone, additional chlorophylls, carotenoids and lipids. D1 provides most of the ligands for the Mn4-Ca-O5 cluster of the oxygen-evolving complex (OEC). There is also a Cl(-1) ion associated with D1 and D2, which is required for oxygen evolution. The PSII complex binds additional chlorophylls, carotenoids and specific lipids.. In terms of processing, tyr-161 forms a radical intermediate that is referred to as redox-active TyrZ, YZ or Y-Z. C-terminally processed by CTPA; processing is essential to allow assembly of the oxygen-evolving complex and thus photosynthetic growth.

The protein localises to the plastid. It is found in the chloroplast thylakoid membrane. It catalyses the reaction 2 a plastoquinone + 4 hnu + 2 H2O = 2 a plastoquinol + O2. Photosystem II (PSII) is a light-driven water:plastoquinone oxidoreductase that uses light energy to abstract electrons from H(2)O, generating O(2) and a proton gradient subsequently used for ATP formation. It consists of a core antenna complex that captures photons, and an electron transfer chain that converts photonic excitation into a charge separation. The D1/D2 (PsbA/PsbD) reaction center heterodimer binds P680, the primary electron donor of PSII as well as several subsequent electron acceptors. The polypeptide is Photosystem II protein D1 (Nicotiana debneyi (Debney's tobacco)).